The following is a 182-amino-acid chain: Vacuolar protein sorting-associated protein 29 (182 aa).

Residue K50 is modified to N6-acetyllysine.

Belongs to the VPS29 family. In terms of assembly, component of the commander complex consisting of the CCC subcomplex and the retriever subcomplex. Component of the heterotrimeric retriever complex formed by VPS26C, VPS29 and VPS35L; within the complex interacts with VPS35L. Component of the heterotrimeric retromer cargo-selective complex (CSC), also described as vacuolar protein sorting subcomplex (VPS) formed by VPS26 (VPS26A or VPS26B), VPS29 and VPS35. The CSC has a highly elongated structure with VPS26 and VPS29 binding independently at opposite distal ends of VPS35 as central platform. The CSC is believed to associate with variable sorting nexins to form functionally distinct retromer complex variants. The originally described retromer complex (also called SNX-BAR retromer) is a pentamer containing the CSC and a heterodimeric membrane-deforming subcomplex formed between SNX1 or SNX2 and SNX5 or SNX6 (also called SNX-BAR subcomplex); the respective CSC and SNX-BAR subcomplexes associate with low affinity. The CSC associates with SNX3 to form a SNX3-retromer complex. The CSC associates with SNX27, the WASH complex and the SNX-BAR subcomplex to form the SNX27-retromer complex. Interacts with VPS26A, VPS35, SNX1, SNX2, SNX3, SNX27, WASHC5. Interacts with TBC1D5; this interaction is blocked by VPS35L in the retriever complex. Interacts with SNX17; the interaction is indirect; SNX17 (via its C-terminus) interacts with the retriever complex (via VPS26C and VPS35L). Interacts with VPS26B and ANKRD27.

It localises to the cytoplasm. The protein localises to the membrane. It is found in the endosome membrane. In terms of biological role, component of the commander complex that is essential for endosomal recycling of transmembrane cargos; the commander complex is composed of the CCC subcomplex and the retriever subcomplex. Component of the retriever complex, which is a heterotrimeric complex related to retromer cargo-selective complex (CSC) and essential for retromer-independent retrieval and recycling of numerous cargos such as integrin alpha-5/beta-1 (ITGA5:ITGB1). Component of the retromer cargo-selective complex (CSC). The CSC is believed to be the core functional component of retromer or respective retromer complex variants acting to prevent missorting of selected transmembrane cargo proteins into the lysosomal degradation pathway. The recruitment of the CSC to the endosomal membrane involves RAB7A and SNX3. The SNX-BAR retromer mediates retrograde transport of cargo proteins from endosomes to the trans-Golgi network (TGN) and is involved in endosome-to-plasma membrane transport for cargo protein recycling. The SNX3-retromer mediates the retrograde endosome-to-TGN transport of WLS distinct from the SNX-BAR retromer pathway. The SNX27-retromer is believed to be involved in endosome-to-plasma membrane trafficking and recycling of a broad spectrum of cargo proteins. The CSC seems to act as recruitment hub for other proteins, such as the WASH complex and TBC1D5. Required to regulate transcytosis of the polymeric immunoglobulin receptor (pIgR-pIgA). In the endosomes, retriever complex drives the retrieval and recycling of NxxY-motif-containing cargo proteins by coupling to SNX17, a cargo essential for the homeostatic maintenance of numerous cell surface proteins associated with processes that include cell migration, cell adhesion, nutrient supply and cell signaling. The recruitment of the retriever complex to the endosomal membrane involves CCC and WASH complexes. Involved in GLUT1 endosome-to-plasma membrane trafficking; the function is dependent of association with ANKRD27. This chain is Vacuolar protein sorting-associated protein 29 (Vps29), found in Mus musculus (Mouse).